The chain runs to 142 residues: Regulator of ribonuclease activity B (142 aa).

The interval 117-142 is disordered; the sequence is PNADEDEYGEDGEFFDDEFADDDEKR.

The protein belongs to the RraB family. In terms of assembly, interacts with the C-terminal region of Rne.

Its subcellular location is the cytoplasm. In terms of biological role, globally modulates RNA abundance by binding to RNase E (Rne) and regulating its endonucleolytic activity. Can modulate Rne action in a substrate-dependent manner by altering the composition of the degradosome. The sequence is that of Regulator of ribonuclease activity B from Actinobacillus succinogenes (strain ATCC 55618 / DSM 22257 / CCUG 43843 / 130Z).